The chain runs to 270 residues: Probable septum site-determining protein MinC (270 aa).

The interval 105–129 (DRRAPSSKAADEAPVQQAEPAAPAA) is disordered. Residues 116–129 (EAPVQQAEPAAPAA) are compositionally biased toward low complexity.

The protein belongs to the MinC family. Interacts with MinD and FtsZ.

In terms of biological role, cell division inhibitor that blocks the formation of polar Z ring septums. Rapidly oscillates between the poles of the cell to destabilize FtsZ filaments that have formed before they mature into polar Z rings. Prevents FtsZ polymerization. This is Probable septum site-determining protein MinC from Burkholderia pseudomallei (strain 1106a).